A 193-amino-acid chain; its full sequence is Probable GTP-binding protein EngB (193 aa).

One can recognise an EngB-type G domain in the interval 24 to 193 (NIPEIALAGR…ELKAALAELL (170 aa)). GTP is bound by residues 32-39 (GRSNVGKS), 59-63 (GKTRT), 77-80 (DLPG), 144-147 (TKAD), and 174-176 (FSA). Residues S39 and T61 each contribute to the Mg(2+) site.

This sequence belongs to the TRAFAC class TrmE-Era-EngA-EngB-Septin-like GTPase superfamily. EngB GTPase family. Requires Mg(2+) as cofactor.

In terms of biological role, necessary for normal cell division and for the maintenance of normal septation. In Syntrophomonas wolfei subsp. wolfei (strain DSM 2245B / Goettingen), this protein is Probable GTP-binding protein EngB.